Consider the following 431-residue polypeptide: Pheromone alpha factor receptor (431 aa).

Residues 1-49 (MSDAAPSLSNLFYDPTYNPGQSTINYTSIYGNGSTITFDELQGLVNSTV) are Extracellular-facing. Residues asparagine 25 and asparagine 32 are each glycosylated (N-linked (GlcNAc...) asparagine). Residues 50–72 (TQAIMFGVRCGAAALTLIVMWMT) form a helical membrane-spanning segment. The short motif at 53 to 61 (IMFGVRCGA) is the Glycine zipper motif element. Topologically, residues 73-78 (SRSRKT) are cytoplasmic. Residues 79–102 (PIFIINQVSLFLIILHSALYFKYL) traverse the membrane as a helical segment. The Extracellular segment spans residues 103 to 132 (LSNYSSVTYALTGFPQFISRGDVHVYGATN). A helical membrane pass occupies residues 133 to 156 (IIQVLLVASIETSLVFQIKVIFTG). At 157–163 (DNFKRIG) the chain is on the cytoplasmic side. The helical transmembrane segment at 164-188 (LMLTSISFTLGIATVTMYFVSAVKG) threads the bilayer. At 189 to 205 (MIVTYNDVSATQDKYFN) the chain is on the extracellular side. The helical transmembrane segment at 206 to 230 (ASTILLASSINFMSFVLVVKLILAI) threads the bilayer. Topologically, residues 231 to 241 (RSRRFLGLKQF) are cytoplasmic. A helical membrane pass occupies residues 242-266 (DSFHILLIMSCQSLLVPSIIFILAY). The Extracellular portion of the chain corresponds to 267 to 275 (SLKPNQGTD). Residues 276–299 (VLTTVATLLAVLSLPLSSMWATAA) form a helical membrane-spanning segment. The Cytoplasmic portion of the chain corresponds to 300-431 (NNASKTNTIT…KFWTEDNNNL (132 aa)). 2 positions are modified to phosphoserine: serine 310 and serine 315. The residue at position 329 (threonine 329) is a Phosphothreonine. Phosphoserine is present on serine 331. A Glycyl lysine isopeptide (Lys-Gly) (interchain with G-Cter in ubiquitin) cross-link involves residue lysine 337. Serine 360 carries the phosphoserine modification. Threonine 363 carries the post-translational modification Phosphothreonine. Serine 366 carries the phosphoserine modification. Lysine 374 participates in a covalent cross-link: Glycyl lysine isopeptide (Lys-Gly) (interchain with G-Cter in ubiquitin). Polar residues predominate over residues 379–389 (QLPTPTSSKNT). The tract at residues 379–406 (QLPTPTSSKNTRIGPFADASYKEGEVEP) is disordered. A Phosphothreonine modification is found at threonine 382. Serine 385 and serine 386 each carry phosphoserine. Lysine 400 participates in a covalent cross-link: Glycyl lysine isopeptide (Lys-Gly) (interchain with G-Cter in ubiquitin). Threonine 411 and threonine 414 each carry phosphothreonine. Lysine 422 participates in a covalent cross-link: Glycyl lysine isopeptide (Lys-Gly) (interchain with G-Cter in ubiquitin).

It belongs to the G-protein coupled receptor 4 family. Homodimer. Might also for higher order homooligomers such as homotetramers. Oligomerization is mediated significantly by transmembrane domain 1 (TMD1), possibly in concert with the N-terminal extracellular domain and TMD2. Interaction with GPA1, its dedicated G-alpha protein. In terms of processing, undergoes hyperphosphorylation of the C-terminal cytoplasmic domain after binding of the alpha-factor, which leads to internalization by endocytosis. Monoubiquitination at Lys-337 triggers internalization of STE2. Post-translationally, N-glycosylated. N-glycosylation may be involved in the sorting process for misfolded STE2 protein. In terms of tissue distribution, expressed in MATa strains but not in MATalpha strains.

Its subcellular location is the cell membrane. Its function is as follows. Fungal class D1 G-protein-coupled receptor that acts as an alpha-factor pheromone receptor performing pheromone-dependent signal transduction involved in cellular conjugation, mating projection assembly, and in cell fusion. Following alpha-factor-binding, the signal is transmitted via a tripartite G protein consisting of alpha-, beta- and gamma-subunits (GAP1, STE4 and STE8 respectively) that prepares the cell for conjugation. In the inactive state, the cytoplasmic end of transmembrane domain 7 (TMD7) is unstructured and packs between TMD1-6, blocking the G protein coupling site. Agonist binding results in the outward movement of the extracellular ends of TMD6 and TMD7 by 6 Angstroms. On the intracellular surface, the G protein coupling site is formed by a 20 Angstroms outward movement of the unstructured region in TMD7 that unblocks the site, and a 12 Angstroms inward movement of TMD6. The polypeptide is Pheromone alpha factor receptor (STE2) (Saccharomyces cerevisiae (strain ATCC 204508 / S288c) (Baker's yeast)).